Here is a 219-residue protein sequence, read N- to C-terminus: GTP-binding protein drn-1 (219 aa).

Residues 37-44 (GAGGVGKS), 56-62 (NENYVPT), 85-89 (DTTGS), 146-149 (NKKD), and 177-178 (AK) each bind GTP. Positions 59–67 (YVPTIEDTY) match the Effector region motif. At Cys216 the chain carries Cysteine methyl ester. A lipid anchor (S-geranylgeranyl cysteine) is attached at Cys216. A propeptide spans 217-219 (HIM) (removed in mature form).

Belongs to the small GTPase superfamily. Di-Ras family. Interacts with epac-1 (via C-terminus). Expressed specifically in neurons including the nerve ring, ventral and dorsal nerve cord motor neurons and tail ganglia.

Its subcellular location is the cell membrane. Its function is as follows. Displays low GTPase activity and exists predominantly in the GTP-bound form. Together with epac-1, may regulate acetylcholine release at the neuromuscular junctions probably downstream of G-protein gsa-1 and adenylate cyclase acy-1. The polypeptide is GTP-binding protein drn-1 (Caenorhabditis elegans).